The sequence spans 442 residues: Plasmalemma vesicle-associated protein (442 aa).

At 1-27 the chain is on the cytoplasmic side; sequence MGLAMEHGGSYARAGGSSRGCWYYLRY. The helical; Signal-anchor for type II membrane protein transmembrane segment at 28–48 threads the bilayer; it reads FFLFVSLIQFLIILGLVLFMV. Over 49-442 the chain is Extracellular; sequence YGNVHVSTES…AGIPVAPSSG (394 aa). The stretch at 57–77 forms a coiled coil; the sequence is ESNLQATERRAEGLYSQLLGL. N-linked (GlcNAc...) asparagine glycosylation is found at Asn-83, Asn-89, Asn-113, and Asn-151. Coiled-coil stretches lie at residues 202–225 and 280–387; these read KTRELQHQERQLAKEQLQKVQALC and SSKV…SALD. 2 disordered regions span residues 301–328 and 394–418; these read NSDLQRQKLEAQQGLRASQEAKQKVEKE and SQPMMPVSRPMGPVPNPQPIDPASL. The span at 319–328 shows a compositional bias: basic and acidic residues; sequence QEAKQKVEKE.

Homodimer. As to expression, expressed in lung, kidney, heart, aorta, placenta, muscle, pituitary gland, adrenals, mammary gland, bladder, lymph node, bone marrow, trachea, digestive tract, liver and tumor-associated endothelium.

Its subcellular location is the cell membrane. It localises to the membrane. The protein localises to the caveola. It is found in the cytoplasm. The protein resides in the perinuclear region. In terms of biological role, endothelial cell-specific membrane protein involved in the formation of the diaphragms that bridge endothelial fenestrae. It is also required for the formation of stomata of caveolae and transendothelial channels. Functions in microvascular permeability, endothelial fenestrae contributing to the passage of water and solutes and regulating transcellular versus paracellular flow in different organs. Plays a specific role in embryonic development. The sequence is that of Plasmalemma vesicle-associated protein (PLVAP) from Homo sapiens (Human).